A 73-amino-acid polypeptide reads, in one-letter code: Cx9C motif-containing protein 4, mitochondrial (73 aa).

One can recognise a CHCH domain in the interval serine 2–asparagine 44. 2 consecutive short sequence motifs (cx9C motif) follow at residues cysteine 5–cysteine 15 and cysteine 26–cysteine 36. 2 disulfide bridges follow: cysteine 5–cysteine 36 and cysteine 15–cysteine 26.

The protein belongs to the CMC4 family.

It localises to the mitochondrion intermembrane space. This chain is Cx9C motif-containing protein 4, mitochondrial (CMC4), found in Saccharomyces cerevisiae (strain ATCC 204508 / S288c) (Baker's yeast).